The primary structure comprises 386 residues: L-lactate dehydrogenase (386 aa).

In terms of domain architecture, FMN hydroxy acid dehydrogenase spans 1–380; it reads MIISAASDYR…SGDALSRVTR (380 aa). Tyr24 is a substrate binding site. Ser106 and Gln127 together coordinate FMN. Residue Tyr129 coordinates substrate. An FMN-binding site is contributed by Thr155. Arg164 serves as a coordination point for substrate. Lys251 serves as a coordination point for FMN. The Proton acceptor role is filled by His275. Arg278 is a binding site for substrate. 306–330 contributes to the FMN binding site; sequence DSGIRSGLDVVRMLALGADAVLLGR.

It belongs to the FMN-dependent alpha-hydroxy acid dehydrogenase family. Requires FMN as cofactor.

Its subcellular location is the cell inner membrane. The enzyme catalyses (S)-lactate + A = pyruvate + AH2. Catalyzes the conversion of L-lactate to pyruvate. Is coupled to the respiratory chain. The protein is L-lactate dehydrogenase of Xanthomonas campestris pv. campestris (strain 8004).